The chain runs to 101 residues: Phosphoribosyl-AMP cyclohydrolase (101 aa).

Aspartate 71 contributes to the Mg(2+) binding site. Cysteine 72 is a Zn(2+) binding site. Positions 73 and 75 each coordinate Mg(2+). Cysteine 88 and cysteine 95 together coordinate Zn(2+).

This sequence belongs to the PRA-CH family. In terms of assembly, homodimer. Requires Mg(2+) as cofactor. The cofactor is Zn(2+).

The protein localises to the cytoplasm. It catalyses the reaction 1-(5-phospho-beta-D-ribosyl)-5'-AMP + H2O = 1-(5-phospho-beta-D-ribosyl)-5-[(5-phospho-beta-D-ribosylamino)methylideneamino]imidazole-4-carboxamide. It participates in amino-acid biosynthesis; L-histidine biosynthesis; L-histidine from 5-phospho-alpha-D-ribose 1-diphosphate: step 3/9. In terms of biological role, catalyzes the hydrolysis of the adenine ring of phosphoribosyl-AMP. This chain is Phosphoribosyl-AMP cyclohydrolase, found in Bacillus cereus (strain Q1).